A 321-amino-acid polypeptide reads, in one-letter code: GTP 3',8-cyclase (321 aa).

Residues 5–233 (SFNRVIDYIR…QGSSKIYTLE (229 aa)) form the Radical SAM core domain. Arg14 lines the GTP pocket. The [4Fe-4S] cluster site is built by Cys21 and Cys25. Tyr27 is a binding site for S-adenosyl-L-methionine. Cys28 contributes to the [4Fe-4S] cluster binding site. Arg64 lines the GTP pocket. An S-adenosyl-L-methionine-binding site is contributed by Gly68. Position 95 (Ser95) interacts with GTP. Ser119 contributes to the S-adenosyl-L-methionine binding site. Lys155 serves as a coordination point for GTP. Residue Met189 coordinates S-adenosyl-L-methionine. [4Fe-4S] cluster contacts are provided by Cys249 and Cys252. Residue 254–256 (RIR) coordinates GTP. Cys266 is a binding site for [4Fe-4S] cluster.

Belongs to the radical SAM superfamily. MoaA family. Monomer and homodimer. [4Fe-4S] cluster is required as a cofactor.

It catalyses the reaction GTP + AH2 + S-adenosyl-L-methionine = (8S)-3',8-cyclo-7,8-dihydroguanosine 5'-triphosphate + 5'-deoxyadenosine + L-methionine + A + H(+). Its pathway is cofactor biosynthesis; molybdopterin biosynthesis. Catalyzes the cyclization of GTP to (8S)-3',8-cyclo-7,8-dihydroguanosine 5'-triphosphate. The chain is GTP 3',8-cyclase from Helicobacter pylori (strain ATCC 700392 / 26695) (Campylobacter pylori).